A 178-amino-acid polypeptide reads, in one-letter code: Small ribosomal subunit protein uS5 (178 aa).

Positions 13-76 (LEERVVQINR…EAAKRNLIRV (64 aa)) constitute an S5 DRBM domain. Residues 156-178 (ASRRDMTPQELMERRTRRETEAA) are disordered.

Belongs to the universal ribosomal protein uS5 family. Part of the 30S ribosomal subunit. Contacts proteins S4 and S8.

Functionally, with S4 and S12 plays an important role in translational accuracy. Located at the back of the 30S subunit body where it stabilizes the conformation of the head with respect to the body. In Chloroflexus aurantiacus (strain ATCC 29364 / DSM 637 / Y-400-fl), this protein is Small ribosomal subunit protein uS5.